A 108-amino-acid chain; its full sequence is Putative membrane protein insertion efficiency factor (108 aa).

It belongs to the UPF0161 family.

Its subcellular location is the cell inner membrane. In terms of biological role, could be involved in insertion of integral membrane proteins into the membrane. The protein is Putative membrane protein insertion efficiency factor of Chelativorans sp. (strain BNC1).